A 179-amino-acid polypeptide reads, in one-letter code: Large ribosomal subunit protein uL5 (179 aa).

It belongs to the universal ribosomal protein uL5 family. As to quaternary structure, part of the 50S ribosomal subunit; part of the 5S rRNA/L5/L18/L25 subcomplex. Contacts the 5S rRNA and the P site tRNA. Forms a bridge to the 30S subunit in the 70S ribosome.

Functionally, this is one of the proteins that bind and probably mediate the attachment of the 5S RNA into the large ribosomal subunit, where it forms part of the central protuberance. In the 70S ribosome it contacts protein S13 of the 30S subunit (bridge B1b), connecting the 2 subunits; this bridge is implicated in subunit movement. Contacts the P site tRNA; the 5S rRNA and some of its associated proteins might help stabilize positioning of ribosome-bound tRNAs. The chain is Large ribosomal subunit protein uL5 from Francisella tularensis subsp. mediasiatica (strain FSC147).